We begin with the raw amino-acid sequence, 61 residues long: Large ribosomal subunit protein eL37 (61 aa).

Positions 19, 22, 34, and 37 each coordinate Zn(2+). The C4-type zinc-finger motif lies at 19 to 37 (CRRCGRNAYNVSKHYCAAC).

It belongs to the eukaryotic ribosomal protein eL37 family. Zn(2+) is required as a cofactor.

Functionally, binds to the 23S rRNA. In Saccharolobus solfataricus (strain ATCC 35092 / DSM 1617 / JCM 11322 / P2) (Sulfolobus solfataricus), this protein is Large ribosomal subunit protein eL37 (rpl37e).